The primary structure comprises 393 residues: Formate-dependent phosphoribosylglycinamide formyltransferase (393 aa).

N(1)-(5-phospho-beta-D-ribosyl)glycinamide is bound by residues 22–23 (EL) and Glu82. ATP is bound by residues Arg114, Lys155, 160 to 165 (SSGKGQ), 195 to 198 (EGFI), and Glu203. An ATP-grasp domain is found at 119-308 (RLAAEELKLP…QFALHARAIL (190 aa)). The Mg(2+) site is built by Glu267 and Glu279. Residues Asp286, Lys356, and 363–364 (RR) contribute to the N(1)-(5-phospho-beta-D-ribosyl)glycinamide site.

It belongs to the PurK/PurT family. In terms of assembly, homodimer.

The enzyme catalyses N(1)-(5-phospho-beta-D-ribosyl)glycinamide + formate + ATP = N(2)-formyl-N(1)-(5-phospho-beta-D-ribosyl)glycinamide + ADP + phosphate + H(+). The protein operates within purine metabolism; IMP biosynthesis via de novo pathway; N(2)-formyl-N(1)-(5-phospho-D-ribosyl)glycinamide from N(1)-(5-phospho-D-ribosyl)glycinamide (formate route): step 1/1. In terms of biological role, involved in the de novo purine biosynthesis. Catalyzes the transfer of formate to 5-phospho-ribosyl-glycinamide (GAR), producing 5-phospho-ribosyl-N-formylglycinamide (FGAR). Formate is provided by PurU via hydrolysis of 10-formyl-tetrahydrofolate. This chain is Formate-dependent phosphoribosylglycinamide formyltransferase, found in Pseudomonas syringae pv. tomato (strain ATCC BAA-871 / DC3000).